Here is a 686-residue protein sequence, read N- to C-terminus: MIHTPTGSSRRILTFPAVNPCESISLTTLVDSLLQLAGEILSFKPKHFSTNKRSVKETLRHVQTLVIFFEELRIQIRVGSIPAGRSVILSLSELHVIFQKLKFLLDDCTRDGAKLYMLMNSGQVSAHFRDLTRSISTSLDTFPVRSVDLPGEVNELIYLVMRQTRKSEARPDRDDKRAIDSVYWFFNLFENRINPNSDEILRVLDHIGVRKWRDCVKEIDFLREEISVGKKSNIEIELLSNLMGFICYCRCVILRGIDVDDEEKDKEEDDLMMVRSLNVDDLRCPISLEIMSDPVVLESGHTYDRSSITKWFASGNITCPKTGKTLVSTVLVDNFSVKQVIQSYSKQNGVVMGQKGKKKVDVAESLAAEEAGKLTAEFLAGELIKGDEEEMVKALVEIRILTKTSTFYRSCLVEAGVVESLMKILRSDDPRIQENAMAGIMNLSKDIAGKTRIVGEDGGGLRLIVEVLNDGARRESRQYAAAALFYLSSLGDYSRLIGEISDAIPGLVRIVKSCDYGDSAKRNALIAIRSLLMNQPDNHWRILAAGIVPVLLDLVKSEEISDGVTADSMAILAKMAEYPDGMISVLRRGGLKLAVKILGSSEVSPATKQHCVALLLNLCHNGGSDVVGSLAKNPSIMGSLYTASSNGELGGGKKASALIKMIHEFQERKTGPGEPVLERERFVHAW.

One can recognise a U-box domain in the interval 277–351 (LNVDDLRCPI…QSYSKQNGVV (75 aa)). ARM repeat units lie at residues 406 to 445 (TFYRSCLVEAGVVESLMKILRSDDPRIQENAMAGIMNLSK), 448 to 489 (AGKT…YLSS), 491 to 533 (GDYS…SLLM), 536 to 577 (PDNH…KMAE), and 579 to 620 (PDGM…NLCH).

It carries out the reaction S-ubiquitinyl-[E2 ubiquitin-conjugating enzyme]-L-cysteine + [acceptor protein]-L-lysine = [E2 ubiquitin-conjugating enzyme]-L-cysteine + N(6)-ubiquitinyl-[acceptor protein]-L-lysine.. It functions in the pathway protein modification; protein ubiquitination. In terms of biological role, functions as an E3 ubiquitin ligase. The sequence is that of U-box domain-containing protein 19 (PUB19) from Arabidopsis thaliana (Mouse-ear cress).